The primary structure comprises 491 residues: Katanin p60 ATPase-containing subunit A1 (491 aa).

Positions 1 to 29 (MSLLMISENVKLAREYALLGNYDSAMVYY) are interaction with KATNB1. The interval 1–75 (MSLLMISENV…VKDIMKTLES (75 aa)) is interaction with dynein and NDEL1. Residues 1 to 185 (MSLLMISENV…EPETNKFDST (185 aa)) are interaction with microtubules. 2 positions are modified to phosphoserine; by DYRK2: S42 and S109. Residues 87–185 (QHDLPASEGE…EPETNKFDST (99 aa)) form a disordered region. Position 133 is a phosphothreonine; by DYRK2 (T133). The segment covering 145-169 (HNDRGKAVRCREKKEQNKGREEKNK) has biased composition (basic and acidic residues). S170 bears the Phosphoserine mark. 249 to 256 (GPPGTGKT) provides a ligand contact to ATP.

It belongs to the AAA ATPase family. Katanin p60 subunit A1 subfamily. Can homooligomerize into hexameric rings, which may be promoted by interaction with microtubules. Interacts with KATNB1, which may serve as a targeting subunit. Interacts with ASPM; the katanin complex formation KATNA1:KATNB1 is required for the association of ASPM Interacts with dynein and NDEL1. Associates with the E3 ligase complex containing DYRK2, EDD/UBR5, DDB1 and DCAF1 proteins (EDVP complex). Interacts with KLHL42 (via the kelch domains). Interacts with CUL3; the interaction is enhanced by KLHL42. Interacts with KATNB1 and KATNBL1. Interacts with CAMSAP2 and CAMSAP3; leading to regulate the length of CAMSAP-decorated microtubule stretches. Phosphorylation by DYRK2 triggers ubiquitination and subsequent degradation. Post-translationally, ubiquitinated by the BCR(KLHL42) E3 ubiquitin ligase complex, leading to its proteasomal degradation. Ubiquitinated by the EDVP E3 ligase complex and subsequently targeted for proteasomal degradation.

It is found in the cytoplasm. The protein resides in the midbody. The protein localises to the cytoskeleton. Its subcellular location is the microtubule organizing center. It localises to the centrosome. It is found in the spindle pole. The protein resides in the spindle. It catalyses the reaction n ATP + n H2O + a microtubule = n ADP + n phosphate + (n+1) alpha/beta tubulin heterodimers.. ATPase activity is stimulated by microtubules, which promote homooligomerization. ATP-dependent microtubule severing is stimulated by interaction with KATNB1. Functionally, catalytic subunit of a complex which severs microtubules in an ATP-dependent manner. Microtubule severing may promote rapid reorganization of cellular microtubule arrays and the release of microtubules from the centrosome following nucleation. Microtubule release from the mitotic spindle poles may allow depolymerization of the microtubule end proximal to the spindle pole, leading to poleward microtubule flux and poleward motion of chromosome. Microtubule release within the cell body of neurons may be required for their transport into neuronal processes by microtubule-dependent motor proteins. This transport is required for axonal growth. The protein is Katanin p60 ATPase-containing subunit A1 of Macaca fascicularis (Crab-eating macaque).